We begin with the raw amino-acid sequence, 412 residues long: uncharacterized protein (412 aa).

This sequence belongs to the PQQ oxidoreductase GdhB family. It depends on pyrroloquinoline quinone as a cofactor.

This is an uncharacterized protein from Synechocystis sp. (strain ATCC 27184 / PCC 6803 / Kazusa).